The primary structure comprises 358 residues: HLA class I histocompatibility antigen, alpha chain E (358 aa).

The signal sequence occupies residues 1 to 21 (MVDGTLLLLLSEALALTQTWA). The tract at residues 22 to 111 (GSHSLKYFHT…LRGYYNQSEA (90 aa)) is alpha-1. The Extracellular portion of the chain corresponds to 22 to 305 (GSHSLKYFHT…KPASQPTIPI (284 aa)). The a peptide antigen site is built by Y28, E84, S87, N98, and Y105. N107 carries N-linked (GlcNAc...) asparagine glycosylation. Positions 112 to 203 (GSHTLQWMHG…EKGKETLLHL (92 aa)) are alpha-2. A disulfide bridge links C122 with C185. A peptide antigen-binding residues include S164, K167, Q177, Y180, and Y192. The tract at residues 204-295 (EPPKTHVTHH…GLPEPVTLRW (92 aa)) is alpha-3. In terms of domain architecture, Ig-like C1-type spans 206 to 294 (PKTHVTHHPI…EGLPEPVTLR (89 aa)). Residues C224 and C280 are joined by a disulfide bond. The interval 296 to 305 (KPASQPTIPI) is connecting peptide. Residues 306 to 329 (VGIIAGLVLLGSVVSGAVVAAVIW) traverse the membrane as a helical segment. The Cytoplasmic portion of the chain corresponds to 330 to 358 (RKKSSGGKGGSYSKAEWSDSAQGSESHSL). A disordered region spans residues 333 to 358 (SSGGKGGSYSKAEWSDSAQGSESHSL). Residues 348-358 (DSAQGSESHSL) show a composition bias toward polar residues. Phosphoserine is present on S353.

This sequence belongs to the MHC class I family. In terms of assembly, forms a heterotrimer with B2M and a self- or a pathogen-derived peptide (peptide-bound HLA-E-B2M). Similarly to MHC class Ia assembly, HLA-E-B2M heterodimer interacts with components of the antigen processing machinery TAPBP and TAP1-TAP2 complex; this interaction is required for peptide loading and translocation to the cell surface. Interacts with CALCR; this interaction is required for appropriate folding. The optimum binding peptide is a nonamer (VL9) that is primarily derived from amino-acid residues 3-11 of the signal sequences of most HLA-A, -B, -C and -G molecules. The VL9 peptide anchors to five main sites in the peptide-binding groove of HLA-E. Peptide-bound HLA-E-B2M complex interacts with KLRD1-KLRC1 receptor on NK cells. Binds with lower affinity to activating KLRD1-KLRC2. The common subunit KLRC1 plays a prominent role in directly interacting with HLA-E. Peptide-bound HLA-E-B2M interacts with the alpha-beta TCR on unconventional CD8+ T cells. Peptide-free HLA-E interacts with HLA-F-B2M complex; this interaction may regulate the intracellular trafficking and the stability of peptide-free MHC class I open conformers (OCs). In terms of processing, N-glycosylated. Post-translationally, the soluble form (sHLA-E) can be partly produced by proteolytic cleavage at the cell surface (shedding) by a matrix metalloproteinase. Alternative splicing is also suggested as a mechanism for generation of sHLA-E, although it remains to be proved. In terms of tissue distribution, expressed in secretory endometrial cells during pregnancy (at protein level). The expression in nonlymphoid tissues is restricted to endothelial cells from all types of vessels, including arteries, veins, capillaries, and lymphatics (at protein level). In lymphoid organs, it is mainly expressed in endothelial venules, B and T cells, monocytes, macrophages, NK cells and megakaryocytes (at protein level).

It is found in the cell membrane. The protein resides in the golgi apparatus membrane. It localises to the secreted. Its function is as follows. Non-classical major histocompatibility class Ib molecule involved in immune self-nonself discrimination. In complex with B2M/beta-2-microglobulin binds nonamer self-peptides derived from the signal sequence of classical MHC class Ia molecules (VL9 peptides - VMAPRT[V/L][L/V/I/F]L). Peptide-bound HLA-E-B2M heterotrimeric complex primarily functions as a ligand for natural killer (NK) cell inhibitory receptor KLRD1-KLRC1, enabling NK cells to monitor the expression of other MHC class I molecules in healthy cells and to tolerate self. Upon cellular stress, preferentially binds signal sequence-derived peptides from stress-induced chaperones and is no longer recognized by NK cell inhibitory receptor KLRD1-KLRC1, resulting in impaired protection from NK cells. Binds signal sequence-derived peptides from non-classical MHC class Ib HLA-G molecules and acts as a ligand for NK cell activating receptor KLRD1-KLRC2, likely playing a role in the generation and effector functions of adaptive NK cells and in maternal-fetal tolerance during pregnancy. Besides self-peptides, can also bind and present pathogen-derived peptides conformationally similar to VL9 peptides to alpha-beta T cell receptor (TCR) on unconventional CD8-positive cytotoxic T cells, ultimately triggering antimicrobial immune response. Presents HIV gag peptides (immunodominant KAFSPEVIPMF and subdominant KALGPAATL epitopes) predominantly to CD8-positive T cell clones expressing a TRAV17-containing TCR, triggering HLA-E-restricted T cell responses. Presents mycobacterial peptides to HLA-E-restricted CD8-positive T cells eliciting both cytotoxic and immunoregulatory functions. In terms of biological role, (Microbial infection) Viruses like human cytomegalovirus have evolved an escape mechanism whereby virus-induced down-regulation of host MHC class I molecules is coupled to the binding of viral peptides to HLA-E, restoring HLA-E expression and inducing HLA-E-dependent NK cell immune tolerance to infected cells. Functionally, (Microbial infection) May bind HIV-1 gag/Capsid protein p24-derived peptide (AISPRTLNA) on infected cells and may inhibit NK cell cytotoxicity, a mechanism that allows HIV-1 to escape immune recognition. (Microbial infection) Upon SARS-CoV-2 infection, may contribute to functional exhaustion of cytotoxic NK cells and CD8-positive T cells. Binds SARS-CoV-2 S/Spike protein S1-derived peptide (LQPRTFLL) expressed on the surface of lung epithelial cells, inducing NK cell exhaustion and dampening of antiviral immune surveillance. The sequence is that of HLA class I histocompatibility antigen, alpha chain E from Homo sapiens (Human).